A 254-amino-acid polypeptide reads, in one-letter code: Rho-related protein racD (254 aa).

Residue 15-22 (GDGAVGKT) participates in GTP binding. Positions 37 to 45 (YVPTVFDNF) match the Effector region motif. GTP-binding positions include 62–66 (DTAGQ) and 120–123 (TKTD). Low complexity predominate over residues 186-231 (AVTSPTSKSSGKSSPSSTSSKPSKTTTTTTTSSSSSSPPAASTAKP). The interval 186–254 (AVTSPTSKSS…KDKDEKKPAK (69 aa)) is disordered. Basic and acidic residues predominate over residues 232–254 (AGEKKLSWGLFRKKDKDEKKPAK).

It belongs to the small GTPase superfamily. Rho family.

The protein is Rho-related protein racD (racD) of Dictyostelium discoideum (Social amoeba).